Here is a 513-residue protein sequence, read N- to C-terminus: ATP synthase subunit alpha (513 aa).

169 to 176 (GDRQTGKT) is a binding site for ATP.

The protein belongs to the ATPase alpha/beta chains family. In terms of assembly, F-type ATPases have 2 components, CF(1) - the catalytic core - and CF(0) - the membrane proton channel. CF(1) has five subunits: alpha(3), beta(3), gamma(1), delta(1), epsilon(1). CF(0) has three main subunits: a(1), b(2) and c(9-12). The alpha and beta chains form an alternating ring which encloses part of the gamma chain. CF(1) is attached to CF(0) by a central stalk formed by the gamma and epsilon chains, while a peripheral stalk is formed by the delta and b chains.

The protein localises to the cell inner membrane. The enzyme catalyses ATP + H2O + 4 H(+)(in) = ADP + phosphate + 5 H(+)(out). Its function is as follows. Produces ATP from ADP in the presence of a proton gradient across the membrane. The alpha chain is a regulatory subunit. This chain is ATP synthase subunit alpha, found in Aliivibrio fischeri (strain ATCC 700601 / ES114) (Vibrio fischeri).